The chain runs to 264 residues: Proliferating cell nuclear antigen (264 aa).

The DNA-binding element occupies 61–80 (RCDRNISMGMNLGNMAKMLK).

It belongs to the PCNA family.

It localises to the nucleus. Its function is as follows. This protein is an auxiliary protein of DNA polymerase delta and is involved in the control of eukaryotic DNA replication by increasing the polymerase's processibility during elongation of the leading strand. The sequence is that of Proliferating cell nuclear antigen from Daucus carota (Wild carrot).